We begin with the raw amino-acid sequence, 20 residues long: Brevinin-1DYc (20 aa).

C14 and C20 form a disulfide bridge.

As to expression, expressed by the skin glands.

It localises to the secreted. Its function is as follows. Antimicrobial peptide. Has low activity against the Gram-positive bacterium S.aureus and the Gram-negative bacterium E.coli (MIC&lt;15 uM). Has a strong hemolytic activity. In Rana dybowskii (Dybovsky's frog), this protein is Brevinin-1DYc.